A 426-amino-acid chain; its full sequence is Gamma-glutamyl phosphate reductase (426 aa).

Belongs to the gamma-glutamyl phosphate reductase family.

It is found in the cytoplasm. It catalyses the reaction L-glutamate 5-semialdehyde + phosphate + NADP(+) = L-glutamyl 5-phosphate + NADPH + H(+). The protein operates within amino-acid biosynthesis; L-proline biosynthesis; L-glutamate 5-semialdehyde from L-glutamate: step 2/2. Its function is as follows. Catalyzes the NADPH-dependent reduction of L-glutamate 5-phosphate into L-glutamate 5-semialdehyde and phosphate. The product spontaneously undergoes cyclization to form 1-pyrroline-5-carboxylate. The protein is Gamma-glutamyl phosphate reductase of Cupriavidus taiwanensis (strain DSM 17343 / BCRC 17206 / CCUG 44338 / CIP 107171 / LMG 19424 / R1) (Ralstonia taiwanensis (strain LMG 19424)).